The sequence spans 468 residues: Putrescine aminotransferase (468 aa).

Residues 150-151 (GT) and Gln-274 contribute to the pyridoxal 5'-phosphate site. Position 300 is an N6-(pyridoxal phosphate)lysine (Lys-300). Residue Thr-332 participates in pyridoxal 5'-phosphate binding.

It belongs to the class-III pyridoxal-phosphate-dependent aminotransferase family. Putrescine aminotransferase subfamily. Requires pyridoxal 5'-phosphate as cofactor.

It catalyses the reaction an alkane-alpha,omega-diamine + 2-oxoglutarate = an omega-aminoaldehyde + L-glutamate. The catalysed reaction is putrescine + 2-oxoglutarate = 1-pyrroline + L-glutamate + H2O. The enzyme catalyses cadaverine + 2-oxoglutarate = 5-aminopentanal + L-glutamate. Its pathway is amine and polyamine degradation; putrescine degradation; 4-aminobutanal from putrescine (transaminase route): step 1/1. Functionally, catalyzes the aminotransferase reaction from putrescine to 2-oxoglutarate, leading to glutamate and 4-aminobutanal, which spontaneously cyclizes to form 1-pyrroline. This is the first step in one of two pathways for putrescine degradation, where putrescine is converted into 4-aminobutanoate (gamma-aminobutyrate or GABA) via 4-aminobutanal. Also functions as a cadaverine transaminase in a a L-lysine degradation pathway to succinate that proceeds via cadaverine, glutarate and L-2-hydroxyglutarate. The protein is Putrescine aminotransferase of Pectobacterium atrosepticum (strain SCRI 1043 / ATCC BAA-672) (Erwinia carotovora subsp. atroseptica).